The sequence spans 358 residues: MGKVKRNAPCPCGSGKKYKKCCGSKVVDFPAELAAKEAKQIQEDLVEYAFTVHRESISGFINQHDFLSAMDRQTKDISVFNLGIWGIFFHPLAGEKTIFEEYLQKKGDSITRPKTREIVESWQSMTPALLLLKDLKEGIIHFEDVITAKQFEVEMDASNQDLPPVGSLILGYPIHEAEKAEFFMQFTIFPVKRTEALISKVKKYADAAVKDGKTPEDFMKQEFNNVLFALLAEKDEEPQAEKAEVSTVEWANDLEKETAAAIEEGMSGEEYPTELIPAVIDIWKTFCEKKSPVIRKPEAFAAAVEYYVNAISLNGASVSQAKLAKKYGVSASTISSRYKEIESTLQDEADRFAQALSS.

Position 207–214 (207–214 (AAVKDGKT)) interacts with ATP.

This is an uncharacterized protein from Bacillus subtilis (strain 168).